We begin with the raw amino-acid sequence, 376 residues long: Erythronate-4-phosphate dehydrogenase (376 aa).

Residues Ser45 and Thr67 each coordinate substrate. Asp147 is an NAD(+) binding site. Residue Arg209 is part of the active site. Position 233 (Asp233) interacts with NAD(+). Residue Glu238 is part of the active site. The Proton donor role is filled by His255. Position 258 (Gly258) interacts with NAD(+). Tyr259 is a binding site for substrate.

It belongs to the D-isomer specific 2-hydroxyacid dehydrogenase family. PdxB subfamily. In terms of assembly, homodimer.

It localises to the cytoplasm. It catalyses the reaction 4-phospho-D-erythronate + NAD(+) = (R)-3-hydroxy-2-oxo-4-phosphooxybutanoate + NADH + H(+). Its pathway is cofactor biosynthesis; pyridoxine 5'-phosphate biosynthesis; pyridoxine 5'-phosphate from D-erythrose 4-phosphate: step 2/5. Functionally, catalyzes the oxidation of erythronate-4-phosphate to 3-hydroxy-2-oxo-4-phosphonooxybutanoate. The protein is Erythronate-4-phosphate dehydrogenase of Shewanella baltica (strain OS155 / ATCC BAA-1091).